Here is a 155-residue protein sequence, read N- to C-terminus: Endoribonuclease YbeY (155 aa).

The Zn(2+) site is built by histidine 114, histidine 118, and histidine 124.

The protein belongs to the endoribonuclease YbeY family. The cofactor is Zn(2+).

The protein localises to the cytoplasm. In terms of biological role, single strand-specific metallo-endoribonuclease involved in late-stage 70S ribosome quality control and in maturation of the 3' terminus of the 16S rRNA. The polypeptide is Endoribonuclease YbeY (Escherichia coli O81 (strain ED1a)).